We begin with the raw amino-acid sequence, 96 residues long: Large ribosomal subunit protein uL23 (96 aa).

It belongs to the universal ribosomal protein uL23 family. Part of the 50S ribosomal subunit. Contacts protein L29, and trigger factor when it is bound to the ribosome.

Functionally, one of the early assembly proteins it binds 23S rRNA. One of the proteins that surrounds the polypeptide exit tunnel on the outside of the ribosome. Forms the main docking site for trigger factor binding to the ribosome. The protein is Large ribosomal subunit protein uL23 of Ruthia magnifica subsp. Calyptogena magnifica.